We begin with the raw amino-acid sequence, 120 residues long: NAD(P)H-quinone oxidoreductase subunit 3, chloroplastic (120 aa).

The next 3 membrane-spanning stretches (helical) occupy residues 9 to 29 (IFWAFLMISSVIPILAFLISG), 64 to 84 (MFALVFVVFDVETVFLYPWAM), and 88 to 108 (VLGVSAFIEALIFVLIPIVGS).

This sequence belongs to the complex I subunit 3 family. NDH is composed of at least 16 different subunits, 5 of which are encoded in the nucleus.

Its subcellular location is the plastid. It is found in the chloroplast thylakoid membrane. It carries out the reaction a plastoquinone + NADH + (n+1) H(+)(in) = a plastoquinol + NAD(+) + n H(+)(out). The enzyme catalyses a plastoquinone + NADPH + (n+1) H(+)(in) = a plastoquinol + NADP(+) + n H(+)(out). Its function is as follows. NDH shuttles electrons from NAD(P)H:plastoquinone, via FMN and iron-sulfur (Fe-S) centers, to quinones in the photosynthetic chain and possibly in a chloroplast respiratory chain. The immediate electron acceptor for the enzyme in this species is believed to be plastoquinone. Couples the redox reaction to proton translocation, and thus conserves the redox energy in a proton gradient. The sequence is that of NAD(P)H-quinone oxidoreductase subunit 3, chloroplastic from Illicium oligandrum (Star anise).